The following is a 291-amino-acid chain: Alpha-soluble NSF attachment protein (291 aa).

TPR repeat units follow at residues 14–51 (ADKRLRGGNFFKMFGGGSSRYDDAASDYTKAANLFKMS), 77–110 (AASSYVLAAGCYKKGNVIDAITCLKAAIEYYTDE), 117–150 (AKHQKEIAELYEAEGDFDQAIASYQIASDYFDGE), and 157–190 (HQCLLKIALFSAQLERYEKSIEIYEQVAAASLDN).

The protein belongs to the SNAP family. In terms of assembly, interacts with nsfA and probably SNARE proteins.

The protein localises to the cytoplasmic vesicle membrane. Functionally, may be required for vesicular transport between the endoplasmic reticulum and the Golgi apparatus. Involved in vesicle fusion with nsfA and probably SNARE proteins. In Dictyostelium discoideum (Social amoeba), this protein is Alpha-soluble NSF attachment protein (snpA).